We begin with the raw amino-acid sequence, 985 residues long: UPF0182 protein Cgl0786/cg0896 (985 aa).

The next 7 helical transmembrane spans lie at 19 to 39 (VTWIFAIIALVILIAPMSVGF), 63 to 83 (IVLFVIFALIAGFVTWLAGYF), 115 to 135 (VMVIIPIFVALLAGLIGQRSW), 176 to 196 (SMMLIVAFLIALVGHYLMGGI), 215 to 235 (TQLAVTAGLWMLVKVAGYWLD), 262 to 282 (KIILLVIALFVAIAFFSAIFL), and 290 to 310 (LAVVLMLLSSVIIGAAWPLML). The disordered stretch occupies residues 904-944 (KEAQDIEEVDGTATTPSTDETDTDTDQPATETPTAPVSEAE). Residues 929–939 (DQPATETPTAP) show a composition bias toward low complexity.

This sequence belongs to the UPF0182 family.

The protein resides in the cell membrane. The sequence is that of UPF0182 protein Cgl0786/cg0896 from Corynebacterium glutamicum (strain ATCC 13032 / DSM 20300 / JCM 1318 / BCRC 11384 / CCUG 27702 / LMG 3730 / NBRC 12168 / NCIMB 10025 / NRRL B-2784 / 534).